Consider the following 185-residue polypeptide: Elongation factor P (185 aa).

The protein belongs to the elongation factor P family.

It is found in the cytoplasm. It participates in protein biosynthesis; polypeptide chain elongation. In terms of biological role, involved in peptide bond synthesis. Stimulates efficient translation and peptide-bond synthesis on native or reconstituted 70S ribosomes in vitro. Probably functions indirectly by altering the affinity of the ribosome for aminoacyl-tRNA, thus increasing their reactivity as acceptors for peptidyl transferase. The chain is Elongation factor P from Thermosynechococcus vestitus (strain NIES-2133 / IAM M-273 / BP-1).